Consider the following 428-residue polypeptide: Glutamate-1-semialdehyde 2,1-aminomutase 1 (428 aa).

Position 267 is an N6-(pyridoxal phosphate)lysine (lysine 267).

This sequence belongs to the class-III pyridoxal-phosphate-dependent aminotransferase family. HemL subfamily. In terms of assembly, homodimer. The cofactor is pyridoxal 5'-phosphate.

It is found in the cytoplasm. It carries out the reaction (S)-4-amino-5-oxopentanoate = 5-aminolevulinate. Its pathway is porphyrin-containing compound metabolism; protoporphyrin-IX biosynthesis; 5-aminolevulinate from L-glutamyl-tRNA(Glu): step 2/2. In Staphylococcus aureus (strain bovine RF122 / ET3-1), this protein is Glutamate-1-semialdehyde 2,1-aminomutase 1.